We begin with the raw amino-acid sequence, 333 residues long: 4-hydroxyproline epimerase (333 aa).

The active-site Proton acceptor is the Cys90. Substrate contacts are provided by residues 91 to 92 (GH) and Asp249. Catalysis depends on Cys253, which acts as the Proton donor. 254-255 (GT) is a substrate binding site.

This sequence belongs to the proline racemase family. Homodimer.

The enzyme catalyses trans-4-hydroxy-L-proline = cis-4-hydroxy-D-proline. Its function is as follows. Allows intracellular utilization of 4-hydroxyproline, one of the major constituents of host collagen, by converting 4-hydroxy-L-proline to 4-hydroxy-D-proline, which can be further metabolized by intracellular 4-hydroxy-D-proline oxidases. Strong B-cell mitogen. Plays an important role in the regulation of intra- and extracellular amino acid pools, allowing the bacterium to profit from host precursors and enzymatic pathways. In Brucella suis (strain ATCC 23445 / NCTC 10510), this protein is 4-hydroxyproline epimerase.